A 353-amino-acid chain; its full sequence is Melanin-concentrating hormone receptor 1 (353 aa).

Residues 1-29 (MDLEASLLPTGPNASNTSDGPDNLTSAGS) form a disordered region. Residues 1–44 (MDLEASLLPTGPNASNTSDGPDNLTSAGSPPRTGSISYINIIMP) lie on the Extracellular side of the membrane. The segment covering 12–29 (PNASNTSDGPDNLTSAGS) has biased composition (polar residues). Residues N13, N16, and N23 are each glycosylated (N-linked (GlcNAc...) asparagine). A helical transmembrane segment spans residues 45 to 67 (SVFGTICLLGIIGNSTVIFAVVK). At 68–79 (KSKLHWCNNVPD) the chain is on the cytoplasmic side. A helical membrane pass occupies residues 80 to 102 (IFIINLSVVDLLFLLGMPFMIHQ). The Extracellular segment spans residues 103-116 (LMGNGVWHFGETMC). A disulfide bond links C116 and C194. The helical transmembrane segment at 117–139 (TLITAMDANSQFTSTYILTAMAI) threads the bilayer. The Cytoplasmic portion of the chain corresponds to 140–158 (DRYLATVHPISSTKFRKPS). The helical transmembrane segment at 159–181 (VATLVICLLWALSFISITPVWLY) threads the bilayer. Over 182-209 (ARLIPFPGGAVGCGIRLPNPDTDLYWFT) the chain is Extracellular. Residues 210 to 232 (LYQFFLAFALPFVVITAAYVRIL) traverse the membrane as a helical segment. The Cytoplasmic segment spans residues 233–252 (QRMTSSVAPASQRSIRLRTK). A helical transmembrane segment spans residues 253-275 (RVTRTAIAICLVFFVCWAPYYVL). The Extracellular segment spans residues 276-289 (QLTQLSISRPTLTF). The helical transmembrane segment at 290–312 (VYLYNAAISLGYANSCLNPFVYI) threads the bilayer. Residues 313–353 (VLCETFRKRLVLSVKPAAQGQLRAVSNAQTADEERTESKGT) are Cytoplasmic-facing.

It belongs to the G-protein coupled receptor 1 family. In terms of assembly, interacts with NCDN. Highest level in brain, particularly in the frontal cortex and hypothalamus, lower levels in the liver and heart.

It is found in the cell membrane. Receptor for melanin-concentrating hormone, coupled to both G proteins that inhibit adenylyl cyclase and G proteins that activate phosphoinositide hydrolysis. In Homo sapiens (Human), this protein is Melanin-concentrating hormone receptor 1.